Consider the following 81-residue polypeptide: Photosystem I iron-sulfur center (81 aa).

2 consecutive 4Fe-4S ferredoxin-type domains span residues 2–31 and 39–68; these read AHSV…MVPW and IASA…VRVY. [4Fe-4S] cluster-binding residues include C11, C14, C17, C21, C48, C51, C54, and C58.

The eukaryotic PSI reaction center is composed of at least 11 subunits. [4Fe-4S] cluster serves as cofactor.

The protein resides in the plastid. The protein localises to the chloroplast thylakoid membrane. The catalysed reaction is reduced [plastocyanin] + hnu + oxidized [2Fe-2S]-[ferredoxin] = oxidized [plastocyanin] + reduced [2Fe-2S]-[ferredoxin]. Apoprotein for the two 4Fe-4S centers FA and FB of photosystem I (PSI); essential for photochemical activity. FB is the terminal electron acceptor of PSI, donating electrons to ferredoxin. The C-terminus interacts with PsaA/B/D and helps assemble the protein into the PSI complex. Required for binding of PsaD and PsaE to PSI. PSI is a plastocyanin-ferredoxin oxidoreductase, converting photonic excitation into a charge separation, which transfers an electron from the donor P700 chlorophyll pair to the spectroscopically characterized acceptors A0, A1, FX, FA and FB in turn. The polypeptide is Photosystem I iron-sulfur center (Physcomitrium patens (Spreading-leaved earth moss)).